Reading from the N-terminus, the 70-residue chain is Putative defensin-like protein 73 (70 aa).

The N-terminal stretch at 1–29 is a signal peptide; that stretch reads MNCKIEFMSFLVMTSIVILFLFVSGKVEA. Disulfide bonds link Cys33–Cys68, Cys37–Cys57, Cys43–Cys66, and Cys47–Cys67.

Belongs to the DEFL family.

The protein localises to the secreted. The sequence is that of Putative defensin-like protein 73 (LCR44) from Arabidopsis thaliana (Mouse-ear cress).